A 186-amino-acid chain; its full sequence is Ribosome rescue factor SmrB (186 aa).

One can recognise a Smr domain in the interval 99–174 (IDLHGLTQHQ…SDAAIIVIIE (76 aa)).

This sequence belongs to the SmrB family. Associates with collided ribosomes, but not with correctly translating polysomes.

Its function is as follows. Acts as a ribosome collision sensor. Detects stalled/collided disomes (pairs of ribosomes where the leading ribosome is stalled and a second ribosome has collided with it) and endonucleolytically cleaves mRNA at the 5' boundary of the stalled ribosome. Stalled/collided disomes form a new interface (primarily via the 30S subunits) that binds SmrB. Cleaved mRNA becomes available for tmRNA ligation, leading to ribosomal subunit dissociation and rescue of stalled ribosomes. In Buchnera aphidicola subsp. Acyrthosiphon pisum (strain 5A), this protein is Ribosome rescue factor SmrB.